Here is a 330-residue protein sequence, read N- to C-terminus: Tryptophan--tRNA ligase (330 aa).

Residues 6 to 8 (QPT) and 14 to 15 (GN) contribute to the ATP site. The short motif at 7–15 (PTGSLHLGN) is the 'HIGH' region element. Aspartate 130 provides a ligand contact to L-tryptophan. Residues 142 to 144 (GED), valine 185, and 194 to 198 (KMSKS) each bind ATP. A 'KMSKS' region motif is present at residues 194-198 (KMSKS).

It belongs to the class-I aminoacyl-tRNA synthetase family. Homodimer.

Its subcellular location is the cytoplasm. It carries out the reaction tRNA(Trp) + L-tryptophan + ATP = L-tryptophyl-tRNA(Trp) + AMP + diphosphate + H(+). Catalyzes the attachment of tryptophan to tRNA(Trp). This chain is Tryptophan--tRNA ligase, found in Thermosynechococcus vestitus (strain NIES-2133 / IAM M-273 / BP-1).